Consider the following 395-residue polypeptide: MAKEHYERTKPHVNIGTIGHVDHGKTTLTAAITKVLASKGLAKEQDFASIDAAPEERERGITINTAHVEYETEKRHYAHIDAPGHADYVKNMITGAAQMDGAILVVAATDGPMPQTREHILLARQVGVDYIVVFLNKTDLVDDDELVDLVEMEVRELLSEYDFPGDDIPVIRGSALKALEGDPEQEKVIMHLMDVVDEYIPTPVRDTEKPFLMPVEDVFSITGRGTVASGRIDRGTVKVGDEVEIVGLHEDVLKSTVTGLEMFRKTLDLGEAGDNVGALLRGVNREQVVRGQVLAKPGSIQTHKKFKGEVYILSKEEGGRHTPFFSNYRPQFYFHTTDITGVIELPDGVEMVMPGDNVTFTVELIQPAAIEKGTKFTVREGGHTVGAGVVSEIDD.

The region spanning 10-204 (KPHVNIGTIG…VVDEYIPTPV (195 aa)) is the tr-type G domain. Positions 19–26 (GHVDHGKT) are G1. 19-26 (GHVDHGKT) contributes to the GTP binding site. A Mg(2+)-binding site is contributed by T26. The G2 stretch occupies residues 60-64 (GITIN). Residues 81–84 (DAPG) form a G3 region. Residues 81–85 (DAPGH) and 136–139 (NKTD) contribute to the GTP site. The segment at 136–139 (NKTD) is G4. The tract at residues 174–176 (SAL) is G5.

It belongs to the TRAFAC class translation factor GTPase superfamily. Classic translation factor GTPase family. EF-Tu/EF-1A subfamily. In terms of assembly, monomer.

It localises to the cytoplasm. The enzyme catalyses GTP + H2O = GDP + phosphate + H(+). Functionally, GTP hydrolase that promotes the GTP-dependent binding of aminoacyl-tRNA to the A-site of ribosomes during protein biosynthesis. This is Elongation factor Tu from Lactiplantibacillus plantarum (strain ATCC BAA-793 / NCIMB 8826 / WCFS1) (Lactobacillus plantarum).